Here is a 228-residue protein sequence, read N- to C-terminus: MDQVDLLSILTLGFVLGIKHAMEPDHVIAVSTIVCQSKKLWRSSLAGVFWGIGHTSTLLIFGMTIILMKKKISQEWSMSLEFLVGIILVYFGISAILSLKKTHEHSHSRLHLHTDHPIYTYKGIPYVKSLFIGIIHGLAGSAAMVLLTMSTVEKAWEGLLYILFFGAGTVLGMLSFTTLIGIPFTLSARKIRIHNAFIQITGFISTVFGIHYMYNLGVTEGLFKLWIR.

Transmembrane regions (helical) follow at residues 48–68 (VFWG…IILM), 79–99 (SLEF…ILSL), 130–150 (LFIG…LTMS), 162–182 (ILFF…LIGI), and 196–216 (AFIQ…MYNL).

It belongs to the NiCoT transporter (TC 2.A.52) family.

The protein localises to the cell membrane. Functionally, probably facilitates nickel incorporation. May constitute a multicomponent high-affinity nickel transporter. Not essential for the expression of catalytically active urease. In Bacillus sp. (strain TB-90), this protein is Urease accessory protein UreH (ureH).